A 934-amino-acid chain; its full sequence is Progesterone receptor (934 aa).

Residues 1–49 form a disordered region; sequence MTELKSKGPRAPHVAGGPPSPEVGSPLLCRPAAGPFQGSQTSDTLPEVS. The tract at residues 1-164 is AF3; mediates transcriptional activation; sequence MTELKSKGPR…PATQRVLSPL (164 aa). The tract at residues 1–567 is modulating, Pro-Rich; sequence MTELKSKGPR…YSFESLPQKI (567 aa). The residue at position 20 (Ser-20) is a Phosphoserine. Positions 55 to 59 match the LXXL motif 1 motif; it reads LDGLL. Residues 61–239 are disordered; sequence PRLCQGQDPP…EDSAGPLLKG (179 aa). Position 81 is a phosphoserine (Ser-81). Residues 115–119 carry the LXXL motif 2 motif; it reads LDTLL. Phosphoserine is present on residues Ser-130 and Ser-162. Positions 165 to 305 are mediates transcriptional transrepression; that stretch reads MSRSGGKTED…LATTMMDFIH (141 aa). Residues 183-187 carry the Nuclear localization signal motif; the sequence is KVLPR. Ser-190 is subject to Phosphoserine. Polar residues predominate over residues 191-203; it reads PSRQLLLPTSGSP. Ser-213 is subject to Phosphoserine. The segment covering 220–231 has biased composition (acidic residues); sequence EVEEEDGSESED. Ser-294 is subject to Phosphoserine; by MAPK1. Positions 331 to 375 are disordered; the sequence is GGAGAASAFAPPQSSPSASSTPVAVGDFPDCAYPPDAEPKDNAYP. Low complexity predominate over residues 335 to 350; it reads AASAFAPPQSSPSASS. Ser-345 carries the post-translational modification Phosphoserine; by MAPK. Lys-388 participates in a covalent cross-link: Glycyl lysine isopeptide (Lys-Gly) (interchain with G-Cter in SUMO); alternate. Lys-388 is covalently cross-linked (Glycyl lysine isopeptide (Lys-Gly) (interchain with G-Cter in ubiquitin); alternate). Ser-400 is subject to Phosphoserine; by CDK2. Residues 415 to 454 form a disordered region; that stretch reads PDFPLGPPPQLPPRAPPSRPGEAAVTAAPASASVSSASSP. Residues 418-433 are compositionally biased toward pro residues; sequence PLGPPPQLPPRAPPSR. Positions 434–454 are enriched in low complexity; that stretch reads PGEAAVTAAPASASVSSASSP. Residues 456–547 are AF1; mediates transcriptional activation; sequence STLECILYKA…VYPPYLNYLR (92 aa). Residue Lys-532 forms a Glycyl lysine isopeptide (Lys-Gly) (interchain with G-Cter in SUMO) linkage. 2 NR C4-type zinc fingers span residues 568 to 588 and 604 to 628; these read CLICGDEASGCHYGVLTCGSC and CAGRNDCIVDKIRRKNCPACRLRKC. Residues 568–640 constitute a DNA-binding region (nuclear receptor); it reads CLICGDEASG…AGMVLGGRKF (73 aa). Position 677 is a phosphoserine (Ser-677). The NR LBD domain maps to 680-914; sequence QDIQLIPPLI…EFPEMMSEVI (235 aa). The AF2; mediates transcriptional activation stretch occupies residues 688 to 934; the sequence is LIKLLMSIEP…MVKPLLFHKK (247 aa). Arg-767 contributes to the progesterone binding site.

Belongs to the nuclear hormone receptor family. Interacts with SMARD1 and UNC45A. Interacts with CUEDC2; the interaction promotes ubiquitination, decreases sumoylation, and represses transcriptional activity. Interacts with PIAS3; the interaction promotes sumoylation of PR in a hormone-dependent manner, inhibits DNA-binding, and alters nuclear export. Interacts with SP1; the interaction requires ligand-induced phosphorylation on Ser-345 by ERK1/2-MAPK. Interacts with PRMT2. Interacts with NCOA2 and NCOA1. Interacts with KLF9. Interacts with GTF2B. Post-translationally, phosphorylated on multiple serine sites. Several of these sites are hormone-dependent. Phosphorylation on Ser-294 is highly hormone-dependent and modulates ubiquitination and sumoylation on Lys-388. Phosphorylation on Ser-345 also requires induction by hormone. Basal phosphorylation on Ser-81, Ser-162, Ser-190 and Ser-400 is increased in response to progesterone and can be phosphorylated in vitro by the CDK2-A1 complex. Increased levels of phosphorylation on Ser-400 also in the presence of EGF, heregulin, IGF, PMA and FBS. Phosphorylation at this site by CDK2 is ligand-independent, and increases nuclear translocation and transcriptional activity. Phosphorylation at Ser-162 and Ser-294, but not at Ser-190, is impaired during the G(2)/M phase of the cell cycle. Phosphorylation on Ser-345 by ERK1/2 MAPK is required for interaction with SP1. In terms of processing, sumoylation is hormone-dependent and represses transcriptional activity. Sumoylation on all three sites is enhanced by PIAS3. Desumoylated by SENP1. Sumoylation on Lys-388, the main site of sumoylation, is repressed by ubiquitination on the same site, and modulated by phosphorylation at Ser-294. Ubiquitination is hormone-dependent and represses sumoylation on the same site. Promoted by MAPK-mediated phosphorylation on Ser-294. Ubiquitinated by UBR5, leading to its degradation: UBR5 specifically recognizes and binds ligand-bound PGR when it is not associated with coactivators (NCOAs). In presence of NCOAs, the UBR5-degron is not accessible, preventing its ubiquitination and degradation. Post-translationally, palmitoylated by ZDHHC7 and ZDHHC21. Palmitoylation is required for plasma membrane targeting and for rapid intracellular signaling via ERK and AKT kinases and cAMP generation.

The protein resides in the nucleus. The protein localises to the cytoplasm. In terms of biological role, the steroid hormones and their receptors are involved in the regulation of eukaryotic gene expression and affect cellular proliferation and differentiation in target tissues. Transcriptional activator of several progesteron-dependent promoters in a variety of cell types. Involved in activation of SRC-dependent MAPK signaling on hormone stimulation. The polypeptide is Progesterone receptor (PGR) (Colobus guereza (Mantled guereza)).